We begin with the raw amino-acid sequence, 342 residues long: Nicotinate-nucleotide--dimethylbenzimidazole phosphoribosyltransferase (342 aa).

The active-site Proton acceptor is E311.

It belongs to the CobT family.

The enzyme catalyses 5,6-dimethylbenzimidazole + nicotinate beta-D-ribonucleotide = alpha-ribazole 5'-phosphate + nicotinate + H(+). Its pathway is nucleoside biosynthesis; alpha-ribazole biosynthesis; alpha-ribazole from 5,6-dimethylbenzimidazole: step 1/2. Catalyzes the synthesis of alpha-ribazole-5'-phosphate from nicotinate mononucleotide (NAMN) and 5,6-dimethylbenzimidazole (DMB). This chain is Nicotinate-nucleotide--dimethylbenzimidazole phosphoribosyltransferase, found in Shewanella sediminis (strain HAW-EB3).